Reading from the N-terminus, the 353-residue chain is Photosystem II D2 protein (353 aa).

Threonine 2 is subject to N-acetylthreonine. Position 2 is a phosphothreonine (threonine 2). The helical transmembrane segment at 41-61 (CAYFALGGWLTGTTFVTSWYT) threads the bilayer. Histidine 118 is a binding site for chlorophyll a. A helical membrane pass occupies residues 125 to 141 (GFMLRQFEIARSVQLRP). Residues glutamine 130 and asparagine 143 each coordinate pheophytin a. The chain crosses the membrane as a helical span at residues 153 to 166 (VFVSVFLIYPLGQS). Histidine 198 is a chlorophyll a binding site. The helical transmembrane segment at 208-228 (AALLCAIHGATVENTIFEDGD) threads the bilayer. A plastoquinone is bound by residues histidine 215 and phenylalanine 262. Histidine 215 is a Fe cation binding site. Histidine 269 lines the Fe cation pocket. Residues 279 to 295 (GLWMSAVGVVGLAVNLR) form a helical membrane-spanning segment.

It belongs to the reaction center PufL/M/PsbA/D family. In terms of assembly, PSII is composed of 1 copy each of membrane proteins PsbA, PsbB, PsbC, PsbD, PsbE, PsbF, PsbH, PsbI, PsbJ, PsbK, PsbL, PsbM, PsbT, PsbX, PsbY, PsbZ, Psb30/Ycf12, at least 3 peripheral proteins of the oxygen-evolving complex and a large number of cofactors. It forms dimeric complexes. The cofactor is The D1/D2 heterodimer binds P680, chlorophylls that are the primary electron donor of PSII, and subsequent electron acceptors. It shares a non-heme iron and each subunit binds pheophytin, quinone, additional chlorophylls, carotenoids and lipids. There is also a Cl(-1) ion associated with D1 and D2, which is required for oxygen evolution. The PSII complex binds additional chlorophylls, carotenoids and specific lipids..

Its subcellular location is the plastid. It is found in the chloroplast thylakoid membrane. The catalysed reaction is 2 a plastoquinone + 4 hnu + 2 H2O = 2 a plastoquinol + O2. Its function is as follows. Photosystem II (PSII) is a light-driven water:plastoquinone oxidoreductase that uses light energy to abstract electrons from H(2)O, generating O(2) and a proton gradient subsequently used for ATP formation. It consists of a core antenna complex that captures photons, and an electron transfer chain that converts photonic excitation into a charge separation. The D1/D2 (PsbA/PsbD) reaction center heterodimer binds P680, the primary electron donor of PSII as well as several subsequent electron acceptors. D2 is needed for assembly of a stable PSII complex. The polypeptide is Photosystem II D2 protein (Chaetosphaeridium globosum (Charophycean green alga)).